The sequence spans 315 residues: MAELACFCYPCDREGASVARYSRSAIKCMLSAKIDKSHSSQPYDTQVYGLAPPPVYKKRFNDGNNSRGMNFDTDMYDKVADLLVQILNGIKIGKDKAAEIMAVPISVRHLENLIYRIENKDDILSADPNLITKSVLIAMGLIKDCELTTTAEGGDIVFQNQGFTMWRLDYKSHVLMPITDPNFVEYKITLNHTNPIDDKIVKELVAELRWQYNKFAVITHGKGHYRVVRYSTVANHADRVYSTFKSIQKRNPSYKFNELDTRVIWTNWAAFVKSMLNGMKLDDSKRLLFTKMKPNESSFKGVTTERKLDEVSLLG.

ATP is bound by residues 106–108, Lys-187, and 220–222; these read SVR and HGK. The RNA-binding stretch occupies residues 204-240; that stretch reads LVAELRWQYNKFAVITHGKGHYRVVRYSTVANHADRV. The For NTPase and RTPase activities role is filled by His-224. Arg-226 serves as a coordination point for ATP.

The protein belongs to the rotavirus NSP2 family. Homooctamer. Interacts with VP1; this interaction is weak. Interacts with NSP5; this interaction leads to up-regulation of NSP5 phosphorylation and formation of viral factories. Interacts with host DCP1A, DCP1B, DDX6, EDC4 and EIF2S1/eIF2-alpha; these interactions are probably part of the sequestration of some host SGs and PBs proteins in viral factories. Mg(2+) is required as a cofactor.

Its subcellular location is the host cytoplasm. Its function is as follows. Participates in replication and packaging of the viral genome. Plays a crucial role, together with NSP5, in the formation of virus factories (viroplasms), which are large inclusions in the host cytoplasm where replication intermediates are assembled and viral RNA replication takes place. Displays ssRNA binding, NTPase, RNA triphosphatase (RTPase) and ATP-independent helix-unwinding activities. The unwinding activity may prepare and organize plus-strand RNAs for packaging and replication by removing interfering secondary structures. The RTPase activity plays a role in the removal of the gamma-phosphate from the rotavirus RNA minus strands of dsRNA genome segments. Participates in the selective exclusion of host proteins from stress granules (SG) and P bodies (PB). Also participates in the sequestration of these remodeled organelles in viral factories. This is Non-structural protein 2 from Aves (RV-A).